The primary structure comprises 276 residues: NH(3)-dependent NAD(+) synthetase (276 aa).

G43–S50 contributes to the ATP binding site. D49 provides a ligand contact to Mg(2+). Deamido-NAD(+) is bound at residue R146. T166 provides a ligand contact to ATP. Residue E171 coordinates Mg(2+). Residues K179 and D186 each contribute to the deamido-NAD(+) site. 2 residues coordinate ATP: K195 and T217. H266–K267 provides a ligand contact to deamido-NAD(+).

It belongs to the NAD synthetase family. Homodimer.

It catalyses the reaction deamido-NAD(+) + NH4(+) + ATP = AMP + diphosphate + NAD(+) + H(+). Its pathway is cofactor biosynthesis; NAD(+) biosynthesis; NAD(+) from deamido-NAD(+) (ammonia route): step 1/1. Its function is as follows. Catalyzes the ATP-dependent amidation of deamido-NAD to form NAD. Uses ammonia as a nitrogen source. This chain is NH(3)-dependent NAD(+) synthetase, found in Vibrio vulnificus (strain CMCP6).